The sequence spans 191 residues: Pyridoxal 5'-phosphate synthase subunit PdxT (191 aa).

Position 48–50 (glycine 48–serine 50) interacts with L-glutamine. The active-site Nucleophile is the cysteine 79. L-glutamine is bound by residues arginine 106 and isoleucine 134–arginine 135. Active-site charge relay system residues include histidine 170 and glutamate 172.

Belongs to the glutaminase PdxT/SNO family. As to quaternary structure, in the presence of PdxS, forms a dodecamer of heterodimers. Only shows activity in the heterodimer.

It carries out the reaction aldehydo-D-ribose 5-phosphate + D-glyceraldehyde 3-phosphate + L-glutamine = pyridoxal 5'-phosphate + L-glutamate + phosphate + 3 H2O + H(+). The catalysed reaction is L-glutamine + H2O = L-glutamate + NH4(+). The protein operates within cofactor biosynthesis; pyridoxal 5'-phosphate biosynthesis. Functionally, catalyzes the hydrolysis of glutamine to glutamate and ammonia as part of the biosynthesis of pyridoxal 5'-phosphate. The resulting ammonia molecule is channeled to the active site of PdxS. This chain is Pyridoxal 5'-phosphate synthase subunit PdxT, found in Oenococcus oeni (strain ATCC BAA-331 / PSU-1).